Reading from the N-terminus, the 307-residue chain is Acetyl-coenzyme A carboxylase carboxyl transferase subunit beta (307 aa).

Residues 28 to 297 (LWVKCPDTGQ…TPEPGTAPEP (270 aa)) form the CoA carboxyltransferase N-terminal domain. Positions 286–307 (RRTPEPGTAPEPTTPEPLPNAA) are disordered. Over residues 292 to 307 (GTAPEPTTPEPLPNAA) the composition is skewed to pro residues.

It belongs to the AccD/PCCB family. As to quaternary structure, acetyl-CoA carboxylase is a heterohexamer composed of biotin carboxyl carrier protein (AccB), biotin carboxylase (AccC) and two subunits each of ACCase subunit alpha (AccA) and ACCase subunit beta (AccD).

Its subcellular location is the cytoplasm. The catalysed reaction is N(6)-carboxybiotinyl-L-lysyl-[protein] + acetyl-CoA = N(6)-biotinyl-L-lysyl-[protein] + malonyl-CoA. The protein operates within lipid metabolism; malonyl-CoA biosynthesis; malonyl-CoA from acetyl-CoA: step 1/1. In terms of biological role, component of the acetyl coenzyme A carboxylase (ACC) complex. Biotin carboxylase (BC) catalyzes the carboxylation of biotin on its carrier protein (BCCP) and then the CO(2) group is transferred by the transcarboxylase to acetyl-CoA to form malonyl-CoA. The protein is Acetyl-coenzyme A carboxylase carboxyl transferase subunit beta of Methylorubrum extorquens (strain ATCC 14718 / DSM 1338 / JCM 2805 / NCIMB 9133 / AM1) (Methylobacterium extorquens).